An 89-amino-acid polypeptide reads, in one-letter code: Small ribosomal subunit protein uS15 (89 aa).

The protein belongs to the universal ribosomal protein uS15 family. In terms of assembly, part of the 30S ribosomal subunit. Forms a bridge to the 50S subunit in the 70S ribosome, contacting the 23S rRNA.

Functionally, one of the primary rRNA binding proteins, it binds directly to 16S rRNA where it helps nucleate assembly of the platform of the 30S subunit by binding and bridging several RNA helices of the 16S rRNA. Its function is as follows. Forms an intersubunit bridge (bridge B4) with the 23S rRNA of the 50S subunit in the ribosome. This Anaeromyxobacter sp. (strain Fw109-5) protein is Small ribosomal subunit protein uS15.